The sequence spans 63 residues: MIGVIFYNTKGNFLRVKCLDCGNQQVVFDRAASYVQCIICGKTLVEPTGGKSKIKAQILEVLD.

Zn(2+) contacts are provided by cysteine 18, cysteine 21, cysteine 37, and cysteine 40. The segment at 18-40 adopts a C4-type zinc-finger fold; that stretch reads CLDCGNQQVVFDRAASYVQCIIC.

Belongs to the eukaryotic ribosomal protein eS27 family. As to quaternary structure, part of the 30S ribosomal subunit. Zn(2+) serves as cofactor.

This is Small ribosomal subunit protein eS27 from Methanothermobacter thermautotrophicus (strain ATCC 29096 / DSM 1053 / JCM 10044 / NBRC 100330 / Delta H) (Methanobacterium thermoautotrophicum).